The following is a 101-amino-acid chain: Integration host factor subunit beta (101 aa).

The protein belongs to the bacterial histone-like protein family. As to quaternary structure, heterodimer of an alpha and a beta chain.

In terms of biological role, this protein is one of the two subunits of integration host factor, a specific DNA-binding protein that functions in genetic recombination as well as in transcriptional and translational control. In Rhodopseudomonas palustris (strain BisB5), this protein is Integration host factor subunit beta.